The primary structure comprises 255 residues: MGNGDWSSKWPNDHLFIDDFGKLVWFDVLTDIVKISHFVSQVPTDLSPIPSSYISFIDGRIPMCINHLGWVYIRVKFESEEVFYQKFGEVDVSRFGESELPPDFEVTFSKVTTLVNKSLVRKSELLEKMNNELKQELTNKLDSLEKVNVQLKKELSQAQQSNFTELRDGLILNFSKVGGRIHRMVVRSIQNQLKLVSEINNDGDRWATMGATVILKEGAQYLGFVVVKNDGKIGVKFDLTRLNSLDNQTLLASVV.

The protein belongs to the tobravirus protein 2b family.

It is found in the virion. May function by interacting with a small, flexible domain located at the C-terminus of the CP, forming a bridge between the virus particle and the internal surface of the vector nematode feeding apparatus. The protein is Protein 2b of Tobacco rattle virus (strain TCM).